Consider the following 479-residue polypeptide: Variant surface glycoprotein ILTAT 1.22 (479 aa).

The first 12 residues, 1–12 (MDTAQVFALFYM), serve as a signal peptide directing secretion. N-linked (GlcNAc...) asparagine glycans are attached at residues asparagine 120 and asparagine 458. Residue asparagine 462 is the site of GPI-anchor amidated asparagine attachment. Residues 463–479 (NSFAIKTSTLLLAVLLF) constitute a propeptide, removed in mature form.

It localises to the cell membrane. In terms of biological role, VSG forms a coat on the surface of the parasite. The trypanosome evades the immune response of the host by expressing a series of antigenically distinct VSGs from an estimated 1000 VSG genes. The protein is Variant surface glycoprotein ILTAT 1.22 of Trypanosoma brucei brucei.